A 351-amino-acid chain; its full sequence is MKKIRVICVDDSALVRGLMTEIINSHPDMEVVATAPDPLVARELIKQHNPDVLTLDVEMPRMDGLDFLEKLMRLRPMPVVMVSSLTERGGEITMRALELGAIDFVTKPRLGIRDGLLDYSELIADKIRAASRARLRGPAPVAAAALPARLRSPLNSSEKLVILGASTGGTEAIREVLLPLPPDSPAILITQHMPAGFTRSFAQRLDTLCAVTVREATHGERVLPGHVYLAPGGEQHMKLGRSGANYVIELEAGEPVNRHRPSVDVLFHSAAQAAGRNAIGVLLTGMGKDGAAGLLAMKRAGAYTLAQDEASCVVFGMPREAILLGAADEVVPLPAMSERILMRAGDRGHRV.

The Response regulatory domain occupies 5-122; it reads RVICVDDSAL…RDGLLDYSEL (118 aa). A 4-aspartylphosphate modification is found at Asp-56. Residues 154 to 341 form the CheB-type methylesterase domain; the sequence is LNSSEKLVIL…PLPAMSERIL (188 aa). Active-site residues include Ser-166, His-192, and Asp-289.

Belongs to the CheB family. Post-translationally, phosphorylated by CheA. Phosphorylation of the N-terminal regulatory domain activates the methylesterase activity.

It is found in the cytoplasm. The enzyme catalyses [protein]-L-glutamate 5-O-methyl ester + H2O = L-glutamyl-[protein] + methanol + H(+). The catalysed reaction is L-glutaminyl-[protein] + H2O = L-glutamyl-[protein] + NH4(+). In terms of biological role, involved in chemotaxis. Part of a chemotaxis signal transduction system that modulates chemotaxis in response to various stimuli. Catalyzes the demethylation of specific methylglutamate residues introduced into the chemoreceptors (methyl-accepting chemotaxis proteins or MCP) by CheR. Also mediates the irreversible deamidation of specific glutamine residues to glutamic acid. This chain is Protein-glutamate methylesterase/protein-glutamine glutaminase 2, found in Bordetella avium (strain 197N).